Reading from the N-terminus, the 160-residue chain is uncharacterized protein (160 aa).

This is an uncharacterized protein from Mycobacterium tuberculosis (strain CDC 1551 / Oshkosh).